The sequence spans 228 residues: A-type ATP synthase subunit D (228 aa).

Residues 205-214 (KKEEEEKAEA) show a composition bias toward basic and acidic residues. Residues 205-228 (KKEEEEKAEAAAEAAAVEDPEPAD) are disordered.

It belongs to the V-ATPase D subunit family. Has multiple subunits with at least A(3), B(3), C, D, E, F, H, I and proteolipid K(x).

Its subcellular location is the cell membrane. Its function is as follows. Component of the A-type ATP synthase that produces ATP from ADP in the presence of a proton gradient across the membrane. The protein is A-type ATP synthase subunit D of Halorubrum lacusprofundi (strain ATCC 49239 / DSM 5036 / JCM 8891 / ACAM 34).